Reading from the N-terminus, the 130-residue chain is Glycine cleavage system H protein (130 aa).

Residues 28-110 (TVRIGITSVA…FGEGWLFEVE (83 aa)) enclose the Lipoyl-binding domain. Lys69 carries the post-translational modification N6-lipoyllysine.

It belongs to the GcvH family. As to quaternary structure, the glycine cleavage system is composed of four proteins: P, T, L and H. It depends on (R)-lipoate as a cofactor.

Functionally, the glycine cleavage system catalyzes the degradation of glycine. The H protein shuttles the methylamine group of glycine from the P protein to the T protein. This is Glycine cleavage system H protein from Corynebacterium aurimucosum (strain ATCC 700975 / DSM 44827 / CIP 107346 / CN-1) (Corynebacterium nigricans).